Consider the following 328-residue polypeptide: uncharacterized protein (328 aa).

Residue Ser170 is modified to Phosphoserine.

It localises to the cytoplasm. The protein localises to the nucleus. This is an uncharacterized protein from Schizosaccharomyces pombe (strain 972 / ATCC 24843) (Fission yeast).